Here is a 171-residue protein sequence, read N- to C-terminus: S-ribosylhomocysteine lyase (171 aa).

The Fe cation site is built by His54, His58, and Cys128.

This sequence belongs to the LuxS family. As to quaternary structure, homodimer. It depends on Fe cation as a cofactor.

It carries out the reaction S-(5-deoxy-D-ribos-5-yl)-L-homocysteine = (S)-4,5-dihydroxypentane-2,3-dione + L-homocysteine. In terms of biological role, involved in the synthesis of autoinducer 2 (AI-2) which is secreted by bacteria and is used to communicate both the cell density and the metabolic potential of the environment. The regulation of gene expression in response to changes in cell density is called quorum sensing. Catalyzes the transformation of S-ribosylhomocysteine (RHC) to homocysteine (HC) and 4,5-dihydroxy-2,3-pentadione (DPD). The chain is S-ribosylhomocysteine lyase from Escherichia coli O157:H7.